The chain runs to 638 residues: Phosphomethylpyrimidine synthase (638 aa).

Substrate-binding positions include Asn233, Met262, Tyr291, His327, 347-349, 388-391, and Glu427; these read SRG and DGLR. Residue His431 coordinates Zn(2+). Tyr454 provides a ligand contact to substrate. Residue His495 coordinates Zn(2+). [4Fe-4S] cluster-binding residues include Cys575, Cys578, and Cys583.

This sequence belongs to the ThiC family. In terms of assembly, homodimer. [4Fe-4S] cluster serves as cofactor.

The enzyme catalyses 5-amino-1-(5-phospho-beta-D-ribosyl)imidazole + S-adenosyl-L-methionine = 4-amino-2-methyl-5-(phosphooxymethyl)pyrimidine + CO + 5'-deoxyadenosine + formate + L-methionine + 3 H(+). It participates in cofactor biosynthesis; thiamine diphosphate biosynthesis. Functionally, catalyzes the synthesis of the hydroxymethylpyrimidine phosphate (HMP-P) moiety of thiamine from aminoimidazole ribotide (AIR) in a radical S-adenosyl-L-methionine (SAM)-dependent reaction. The protein is Phosphomethylpyrimidine synthase of Saccharophagus degradans (strain 2-40 / ATCC 43961 / DSM 17024).